The primary structure comprises 97 residues: Cystatin-A (97 aa).

At methionine 1 the chain carries N-acetylmethionine. The Secondary area of contact motif lies at 46–50 (QVVAG).

It belongs to the cystatin family.

The protein localises to the cytoplasm. In terms of biological role, this is an intracellular thiol proteinase inhibitor. The polypeptide is Cystatin-A (Csta) (Mus musculus (Mouse)).